Here is a 538-residue protein sequence, read N- to C-terminus: MALPYHILLFTVLLPSFTLTAPPPCRCMTSSSPYQEFLWRMRRPGNIDAPSHRSFSKGTPTFTAHTHMPRNCYNSATLCMHANTHYWTGKMINPSCPGGLGVTVCWTYFTHTGMSDGGGVQDQAREKHVKEVISQLTRVHSTSSPYKGLDLSKLHETLRTHTRLVSLFNTTLTGLHEVSAQNPTNCWICLPLDFRPYVSIPVPEEWNNFSTEINTTSVLVGPLVSNLEITHTSNLTCVKFSNTIDTTNSQCIRWVTPPTQIVCLPSGIFFVCGTSAYRCLNGSSESMCFLSFLVPPMTIYTEQDLYNYVVSKPRNKRVPILPFVIGAGVLGALGTGIGGITTSTQFYYKLSQELNGDMERVADSLVTLQDQLNSLAAVVLQNRRALDLLTAERGGTCLFLGEECCYYVNQSGIVTEKVKEIRDRIQRRAEELRNTGPWGLLSQWMPWILPFLGPLAAIILLLLFGPCIFNLLVNFVSSRIEAVKLQMEPKMQSKTKIYRRPLDRPASPRSDVNDIKCTPPEEISTAQPLLRPNSAGSS.

The N-terminal stretch at 1–20 (MALPYHILLFTVLLPSFTLT) is a signal peptide. The Extracellular portion of the chain corresponds to 21-443 (APPPCRCMTS…NTGPWGLLSQ (423 aa)). N-linked (GlcNAc...) asparagine glycosylation occurs at asparagine 169. The short motif at 186 to 189 (CWIC) is the CXXC element. Intrachain disulfides connect cysteine 186-cysteine 189, cysteine 186-cysteine 405, and cysteine 397-cysteine 404. N-linked (GlcNAc...) asparagine glycosylation is found at asparagine 208, asparagine 214, asparagine 234, and asparagine 281. Residues 320-340 (ILPFVIGAGVLGALGTGIGGI) are fusion peptide. The tract at residues 380 to 396 (LQNRRALDLLTAERGGT) is immunosuppression. The CX6CC signature appears at 397-405 (CLFLGEECC). N-linked (GlcNAc...) asparagine glycosylation is present at asparagine 409. The chain crosses the membrane as a helical span at residues 444–464 (WMPWILPFLGPLAAIILLLLF). Positions 465-484 (GPCIFNLLVNFVSSRIEAVK) are essential for the fusiogenic function. The Cytoplasmic portion of the chain corresponds to 465–538 (GPCIFNLLVN…LLRPNSAGSS (74 aa)). Residues 496 to 538 (KIYRRPLDRPASPRSDVNDIKCTPPEEISTAQPLLRPNSAGSS) form a disordered region.

This sequence belongs to the gamma type-C retroviral envelope protein family. HERV class-I W env subfamily. In terms of assembly, the mature envelope protein (Env) consists of a trimer of SU-TM heterodimers attached probably by a labile interchain disulfide bond. Interacts with the C-type lectin CD209/DC-SIGN. Specific enzymatic cleavages in vivo yield mature proteins. Envelope glycoproteins are synthesized as an inactive precursor that is heavily N-glycosylated and processed likely by furin in the Golgi to yield the mature SU and TM proteins. The cleavage site between SU and TM requires the minimal sequence [KR]-X-[KR]-R. In terms of processing, the CXXC motif is highly conserved across a broad range of retroviral envelope proteins. It is thought to participate in the formation of a labile disulfide bond possibly with the CX6CC motif present in the transmembrane protein.

Its subcellular location is the cell membrane. It is found in the virion. Its function is as follows. This endogenous retroviral envelope protein has retained its original fusogenic properties and participates in trophoblast fusion and the formation of a syncytium during placenta morphogenesis. May recognize and induce fusion through binding of SLC1A4 and SLC1A5. Functionally, endogenous envelope proteins may have kept, lost or modified their original function during evolution. Retroviral envelope proteins mediate receptor recognition and membrane fusion during early infection. The surface protein (SU) mediates receptor recognition, while the transmembrane protein (TM) acts as a class I viral fusion protein. The protein may have at least 3 conformational states: pre-fusion native state, pre-hairpin intermediate state, and post-fusion hairpin state. During viral and target cell membrane fusion, the coiled coil regions (heptad repeats) assume a trimer-of-hairpins structure, positioning the fusion peptide in close proximity to the C-terminal region of the ectodomain. The formation of this structure appears to drive apposition and subsequent fusion of membranes. The sequence is that of Syncytin-1 (ERVW-1) from Gorilla gorilla gorilla (Western lowland gorilla).